The sequence spans 326 residues: Cyclin-dependent kinase 6 (326 aa).

N-acetylmethionine is present on Met1. Tyr13 and Tyr24 each carry phosphotyrosine. Positions 13–300 (YECVAEIGEG…AYGALNHPYF (288 aa)) constitute a Protein kinase domain. ATP-binding positions include 19-27 (IGEGAYGKV) and Lys43. Phosphothreonine is present on residues Thr49 and Thr70. The active-site Proton acceptor is the Asp145. The residue at position 177 (Thr177) is a Phosphothreonine. Lys264 carries the post-translational modification N6-acetyllysine. Ser319 bears the Phosphoserine mark. Thr325 carries the post-translational modification Phosphothreonine.

Belongs to the protein kinase superfamily. CMGC Ser/Thr protein kinase family. CDC2/CDKX subfamily. Interaction with D-type G1 cyclins. Cyclin binding promotes enzyme activation by phosphorylation at Thr-177. Binds to RUNX1, CDKN2D, FBXO7 and CDKN2C/p18-INK4c. Forms a cytoplasmic complex with Hsp90/HSP90AB1 and CDC37. FBXO7-binding promotes D-type cyclin binding. Thr-177 phosphorylation and Tyr-24 dephosphorylation promotes kinase activity. As to expression, expressed in subgranular zone (SGZ) of the hippocampal dentate gyrus (DG) and the subventricular zone (SVZ) of the lateral ventricles whose neural precursor cells (NPC) give rise to dentate granule neurons and olfactory bulb (OB) interneurons, respectively. Expressed in the neuroepithelium of the cerebral cortex of the developing brain.

Its subcellular location is the cytoplasm. It is found in the nucleus. The protein resides in the cell projection. The protein localises to the ruffle. It localises to the cytoskeleton. Its subcellular location is the microtubule organizing center. It is found in the centrosome. The catalysed reaction is L-seryl-[protein] + ATP = O-phospho-L-seryl-[protein] + ADP + H(+). It carries out the reaction L-threonyl-[protein] + ATP = O-phospho-L-threonyl-[protein] + ADP + H(+). Activated by Thr-177 phosphorylation and Tyr-24 dephosphorylation. Rapidly down-regulated prior to cell differentiation (e.g. erythroid and osteoblast). In terms of biological role, serine/threonine-protein kinase involved in the control of the cell cycle and differentiation; promotes G1/S transition. Phosphorylates pRB/RB1 and NPM1. Interacts with D-type G1 cyclins during interphase at G1 to form a pRB/RB1 kinase and controls the entrance into the cell cycle. Involved in initiation and maintenance of cell cycle exit during cell differentiation; prevents cell proliferation and negatively regulates cell differentiation, but is required for the proliferation of specific cell types (e.g. erythroid and hematopoietic cells). Essential for cell proliferation within the dentate gyrus of the hippocampus and the subventricular zone of the lateral ventricles. Required during thymocyte development. Promotes the production of newborn neurons, probably by modulating G1 length. Promotes, at least in astrocytes, changes in patterns of gene expression, changes in the actin cytoskeleton including loss of stress fibers, and enhanced motility during cell differentiation. Prevents myeloid differentiation by interfering with RUNX1 and reducing its transcription transactivation activity, but promotes proliferation of normal myeloid progenitors. Delays senescence. Promotes the proliferation of beta-cells in pancreatic islets of Langerhans. May play a role in the centrosome organization during the cell cycle phases. The protein is Cyclin-dependent kinase 6 (Cdk6) of Mus musculus (Mouse).